The chain runs to 430 residues: Histidinol dehydrogenase (430 aa).

The NAD(+) site is built by Y129, Q190, and N213. Substrate is bound by residues S236, Q258, and H261. 2 residues coordinate Zn(2+): Q258 and H261. Catalysis depends on proton acceptor residues E326 and H327. Substrate-binding residues include H327, D360, E414, and H419. D360 contributes to the Zn(2+) binding site. H419 provides a ligand contact to Zn(2+).

The protein belongs to the histidinol dehydrogenase family. Requires Zn(2+) as cofactor.

The enzyme catalyses L-histidinol + 2 NAD(+) + H2O = L-histidine + 2 NADH + 3 H(+). The protein operates within amino-acid biosynthesis; L-histidine biosynthesis; L-histidine from 5-phospho-alpha-D-ribose 1-diphosphate: step 9/9. Its function is as follows. Catalyzes the sequential NAD-dependent oxidations of L-histidinol to L-histidinaldehyde and then to L-histidine. This is Histidinol dehydrogenase from Caldanaerobacter subterraneus subsp. tengcongensis (strain DSM 15242 / JCM 11007 / NBRC 100824 / MB4) (Thermoanaerobacter tengcongensis).